The sequence spans 1286 residues: DNA-directed RNA polymerase 147 kDa polypeptide (1286 aa).

The protein belongs to the poxviridae DNA-directed RNA polymerase 147 kDa subunit family. As to quaternary structure, the DNA-dependent RNA polymerase used for intermediate and late genes expression consists of eight subunits Rpo30/OPG66, Rpo7/OPG90, Rpo22/OPG103, Rpo147/OPG105, Rpo18/OPG119, Rpo19/OPG131, Rpo132/OPG151 and Rpo35/OPG156. The same holoenzyme, with the addition of the transcription-specificity factor OPG109, is used for early gene expression.

It is found in the virion. The catalysed reaction is RNA(n) + a ribonucleoside 5'-triphosphate = RNA(n+1) + diphosphate. Its function is as follows. Part of the DNA-dependent RNA polymerase which catalyzes the transcription of viral DNA into RNA using the four ribonucleoside triphosphates as substrates. Responsible for the transcription of early, intermediate and late genes. DNA-dependent RNA polymerase associates with the early transcription factor (ETF), itself composed of OPG118 and OPG133, thereby allowing the early genes transcription. Late transcription, and probably also intermediate transcription, require newly synthesized RNA polymerase. This Variola virus (isolate Human/India/Ind3/1967) (VARV) protein is DNA-directed RNA polymerase 147 kDa polypeptide (OPG105).